The following is a 117-amino-acid chain: Anti-sigma F factor antagonist (117 aa).

One can recognise an STAS domain in the interval Leu-3–Leu-113. Ser-58 carries the post-translational modification Phosphoserine.

This sequence belongs to the anti-sigma-factor antagonist family. In terms of processing, phosphorylated by SpoIIAB on a serine residue.

Its function is as follows. In the phosphorylated form it could act as an anti-anti-sigma factor that counteracts SpoIIAB and thus releases sigma f from inhibition. The protein is Anti-sigma F factor antagonist (spoIIAA) of Bacillus subtilis (strain 168).